Consider the following 116-residue polypeptide: Calcium-regulated OB-fold protein CarO (116 aa).

The signal sequence occupies residues 1 to 21 (MKLRHLPLIAAIGLFSTVTLA).

It localises to the periplasm. Its function is as follows. Plays a role in intracellular Ca(2+) homeostasis. Involved in cell protection against oxidative stress in strain 25W. The sequence is that of Calcium-regulated OB-fold protein CarO from Pseudomonas aeruginosa (strain ATCC 15692 / DSM 22644 / CIP 104116 / JCM 14847 / LMG 12228 / 1C / PRS 101 / PAO1).